The primary structure comprises 726 residues: WD repeat and coiled-coil-containing protein (726 aa).

2 WD repeats span residues 55–98 (GQFE…LDKN) and 154–194 (KSSG…LNAC). The interval 503-571 (SYDGDQSPTS…SSPPNFIKHG (69 aa)) is disordered. Residues 506–515 (GDQSPTSSAN) show a composition bias toward polar residues. Basic and acidic residues predominate over residues 517–535 (FDDKRSKLRVESLDTEPKN). The span at 550–565 (SRPTSPKSECQKSSPP) shows a compositional bias: polar residues. Residues 581–609 (SISRNVERLCCNFAHLQQHLSELTDITRN) adopt a coiled-coil conformation.

This chain is WD repeat and coiled-coil-containing protein (wdcp), found in Xenopus tropicalis (Western clawed frog).